The primary structure comprises 262 residues: Thiazole synthase (262 aa).

The active-site Schiff-base intermediate with DXP is Lys97. Residues Gly158, 185 to 186, and 207 to 208 each bind 1-deoxy-D-xylulose 5-phosphate; these read AG and NT. Positions 243–262 are disordered; that stretch reads DKAQASTPTVGQPFWHSAEY.

The protein belongs to the ThiG family. In terms of assembly, homotetramer. Forms heterodimers with either ThiH or ThiS.

The protein localises to the cytoplasm. It carries out the reaction [ThiS sulfur-carrier protein]-C-terminal-Gly-aminoethanethioate + 2-iminoacetate + 1-deoxy-D-xylulose 5-phosphate = [ThiS sulfur-carrier protein]-C-terminal Gly-Gly + 2-[(2R,5Z)-2-carboxy-4-methylthiazol-5(2H)-ylidene]ethyl phosphate + 2 H2O + H(+). It participates in cofactor biosynthesis; thiamine diphosphate biosynthesis. Functionally, catalyzes the rearrangement of 1-deoxy-D-xylulose 5-phosphate (DXP) to produce the thiazole phosphate moiety of thiamine. Sulfur is provided by the thiocarboxylate moiety of the carrier protein ThiS. In vitro, sulfur can be provided by H(2)S. The sequence is that of Thiazole synthase from Neisseria meningitidis serogroup A / serotype 4A (strain DSM 15465 / Z2491).